Reading from the N-terminus, the 494-residue chain is Cytochrome P450 71D94 (494 aa).

Residues 1–21 traverse the membrane as a helical; Signal-anchor for type II membrane protein segment; it reads MELNLLLVIIILVATYTVSLL. Position 434 (Cys-434) interacts with heme.

The protein belongs to the cytochrome P450 family. The cofactor is heme.

The protein resides in the endoplasmic reticulum membrane. Cytochrome P450 oxygenase of undefined substrate. Not active with limonene, (+)- or (-)-piperitone, (-)-isopiperitone, piperitenone or (+)-pulegone. This is Cytochrome P450 71D94 (CYP71D94) from Mentha gracilis (Gingermint).